Consider the following 148-residue polypeptide: MEKTFLMVKPDGVQRAFIGEIVARFEKKGFQLVGAKLMQVTPEIAGQHYAEHTEKPFFGELVDFITSGPVFAMVWQGEGVVDTARNMMGKTRPHEAAPGTIRGDFGVTVAKNIIHGSDSLESAEREIAIFFKEEELVDYSKLMNEWIY.

Residues Lys-9, Phe-57, Arg-85, Thr-91, Arg-102, and Asn-112 each contribute to the ATP site. Position 91 is a phosphothreonine (Thr-91). His-115 serves as the catalytic Pros-phosphohistidine intermediate. A Phosphoserine modification is found at Ser-122.

The protein belongs to the NDK family. As to quaternary structure, homotetramer. Requires Mg(2+) as cofactor.

The protein resides in the cytoplasm. The catalysed reaction is a 2'-deoxyribonucleoside 5'-diphosphate + ATP = a 2'-deoxyribonucleoside 5'-triphosphate + ADP. It catalyses the reaction a ribonucleoside 5'-diphosphate + ATP = a ribonucleoside 5'-triphosphate + ADP. In terms of biological role, major role in the synthesis of nucleoside triphosphates other than ATP. The ATP gamma phosphate is transferred to the NDP beta phosphate via a ping-pong mechanism, using a phosphorylated active-site intermediate. This Bacillus cereus (strain ATCC 10987 / NRS 248) protein is Nucleoside diphosphate kinase.